A 402-amino-acid chain; its full sequence is Succinyl-diaminopimelate desuccinylase (402 aa).

Residue His-88 participates in Zn(2+) binding. Asp-90 is a catalytic residue. Residue Asp-121 participates in Zn(2+) binding. Glu-155 functions as the Proton acceptor in the catalytic mechanism. Glu-156, Glu-184, and His-374 together coordinate Zn(2+).

The protein belongs to the peptidase M20A family. DapE subfamily. Homodimer. Zn(2+) is required as a cofactor. Requires Co(2+) as cofactor.

The catalysed reaction is N-succinyl-(2S,6S)-2,6-diaminopimelate + H2O = (2S,6S)-2,6-diaminopimelate + succinate. The protein operates within amino-acid biosynthesis; L-lysine biosynthesis via DAP pathway; LL-2,6-diaminopimelate from (S)-tetrahydrodipicolinate (succinylase route): step 3/3. Functionally, catalyzes the hydrolysis of N-succinyl-L,L-diaminopimelic acid (SDAP), forming succinate and LL-2,6-diaminopimelate (DAP), an intermediate involved in the bacterial biosynthesis of lysine and meso-diaminopimelic acid, an essential component of bacterial cell walls. The protein is Succinyl-diaminopimelate desuccinylase of Psychrobacter sp. (strain PRwf-1).